Here is a 140-residue protein sequence, read N- to C-terminus: Small ribosomal subunit protein uS12m (140 aa).

This sequence belongs to the universal ribosomal protein uS12 family.

The protein resides in the mitochondrion. The chain is Small ribosomal subunit protein uS12m (mrps12) from Dictyostelium citrinum (Slime mold).